The primary structure comprises 453 residues: MSGPTMDHQEPYSVQATAAIASAITFLILFTIFGNALVILAVLTSRSLRAPQNLFLVSLAAADILVATLIIPFSLANELLGYWYFWRAWCEVYLALDVLFCTSSIVHLCAISLDRYWAVSRALEYNSKRTPRRIKCIILTVWLIAAVISLPPLIYKGDQRPEPRGLPQCELNQEAWYILASSIGSFFAPCLIMILVYLRIYVIAKRSHCRGLGAKRGSGEGESKKPQPVAGGVPTSAKVPTLVSPLSSVGEANGHPKPPREKEEGETPEDPEARALPPTWSALPRSGQGQKKGTSGATAEEGDEEDEEEVEECEPQTLPASPASVCNPPLQQPQTSRVLATLRGQVLLGKNVGVASGQWWRRRTQLSREKRFTFVLAVVIGVFVVCWFPFFFSYSLGAICPQHCKVPHGLFQFFFWIGYCNSSLNPVIYTVFNQDFRRAFRRILCRPWTQTGW.

Residues 1–17 (MSGPTMDHQEPYSVQAT) are Extracellular-facing. A helical transmembrane segment spans residues 18 to 42 (AAIASAITFLILFTIFGNALVILAV). The Cytoplasmic portion of the chain corresponds to 43 to 54 (LTSRSLRAPQNL). A helical membrane pass occupies residues 55-80 (FLVSLAAADILVATLIIPFSLANELL). Over 81–90 (GYWYFWRAWC) the chain is Extracellular. Residues Cys90 and Cys169 are joined by a disulfide bond. Residues 91–113 (EVYLALDVLFCTSSIVHLCAISL) traverse the membrane as a helical segment. Topologically, residues 114–135 (DRYWAVSRALEYNSKRTPRRIK) are cytoplasmic. A helical transmembrane segment spans residues 136 to 158 (CIILTVWLIAAVISLPPLIYKGD). Residues 159-174 (QRPEPRGLPQCELNQE) lie on the Extracellular side of the membrane. Residues 175–198 (AWYILASSIGSFFAPCLIMILVYL) form a helical membrane-spanning segment. Residues 199–375 (RIYVIAKRSH…LSREKRFTFV (177 aa)) lie on the Cytoplasmic side of the membrane. A disordered region spans residues 213 to 331 (GAKRGSGEGE…PASVCNPPLQ (119 aa)). Residues 287-297 (GQGQKKGTSGA) show a composition bias toward polar residues. A compositionally biased stretch (acidic residues) spans 300 to 314 (EEGDEEDEEEVEECE). The helical transmembrane segment at 376–399 (LAVVIGVFVVCWFPFFFSYSLGAI) threads the bilayer. The Extracellular portion of the chain corresponds to 400 to 408 (CPQHCKVPH). Residues 409-432 (GLFQFFFWIGYCNSSLNPVIYTVF) traverse the membrane as a helical segment. Topologically, residues 433–453 (NQDFRRAFRRILCRPWTQTGW) are cytoplasmic. Cys445 carries the S-palmitoyl cysteine lipid modification.

It belongs to the G-protein coupled receptor 1 family. Adrenergic receptor subfamily. ADRA2B sub-subfamily. Interacts with RAB26. Interacts with PPP1R9B. Interacts with GGA1, GGA2 and GGA3.

The protein resides in the cell membrane. Functionally, alpha-2 adrenergic receptors mediate the catecholamine-induced inhibition of adenylate cyclase through the action of G proteins. This is Alpha-2B adrenergic receptor (Adra2b) from Rattus norvegicus (Rat).